Here is a 260-residue protein sequence, read N- to C-terminus: HTH-type transcriptional repressor NanR (260 aa).

The disordered stretch occupies residues 1 to 22 (MNAFDSQAEDSPTSLGRSLRRR). Positions 27 to 95 (KKLSEMVEEE…NGERARVSRP (69 aa)) constitute an HTH gntR-type domain. Residues 55–74 (ERELMAFFNVGRPSVREALA) constitute a DNA-binding region (H-T-H motif).

This sequence belongs to the NanR family.

Functionally, transcriptional repressor that controls expression of the genes required for the catabolism of sialic acids. The sequence is that of HTH-type transcriptional repressor NanR from Salmonella newport (strain SL254).